We begin with the raw amino-acid sequence, 374 residues long: C-C chemokine receptor type 2 (374 aa).

Residues 1 to 42 are Extracellular-facing; that stretch reads MLSTSRSRFIRNTNESGEEVTTFFDYDYGAPCHKFDVKQIGA. A glycan (N-linked (GlcNAc...) asparagine) is linked at Asn14. Tyr26 is modified (sulfotyrosine). Residues 43–70 form a helical membrane-spanning segment; it reads QLLPPLYSLVFIFGFVGNMLVVLILINC. The Cytoplasmic portion of the chain corresponds to 71–80; it reads KKLKCLTDIY. A helical membrane pass occupies residues 81–100; sequence LLNLAISDLLFLITLPLWAH. The Extracellular portion of the chain corresponds to 101 to 114; the sequence is SAANEWVFGNAMCK. A disulfide bridge connects residues Cys113 and Cys190. The helical transmembrane segment at 115-136 threads the bilayer; sequence LFTGLYHIGYFGGIFFIILLTI. The Cytoplasmic segment spans residues 137–153; sequence DRYLAIVHAVFALKART. Phosphotyrosine; by JAK2 is present on Tyr139. The chain crosses the membrane as a helical span at residues 154-178; the sequence is VTFGVVTSVITWLVAVFASVPGIIF. Residues 179–206 lie on the Extracellular side of the membrane; sequence TKCQKEDSVYVCGPYFPRGWNNFHTIMR. A helical transmembrane segment spans residues 207 to 226; that stretch reads NILGLVLPLLIMVICYSGIL. Topologically, residues 227–243 are cytoplasmic; sequence KTLLRCRNEKKRHRAVR. The chain crosses the membrane as a helical span at residues 244–268; sequence VIFTIMIVYFLFWTPYNIVILLNTF. At 269-285 the chain is on the extracellular side; the sequence is QEFFGLSNCESTSQLDQ. Residues 286 to 309 traverse the membrane as a helical segment; that stretch reads ATQVTETLGMTHCCINPIIYAFVG. Residues 310 to 374 lie on the Cytoplasmic side of the membrane; that stretch reads EKFRSLFHIA…EASLQDKEGA (65 aa). The disordered stretch occupies residues 348–374; it reads QGLLDGRGKGKSIGRAPEASLQDKEGA.

Belongs to the G-protein coupled receptor 1 family. As to quaternary structure, interacts with ARRB1. Interacts (via extracellular N-terminal region) with beta-defensin DEFB106A/DEFB106B; this interaction may preferentially require specific tyrosine sulfation on CCR2. Interacts with NUP85; the interaction is required for CCR2 clusters formation on the cell membrane and CCR2 signaling. In terms of assembly, (Microbial infection) Binds to HIV-1 Tat. Post-translationally, N-glycosylated. Sulfation increases the affinity for both monomeric and dimeric CCL2 with stronger binding to the monomeric form. Binding of sulfated CCR2 to CCL2 promotes conversion of CCL2 from dimer to monomer. Expressed by monocytes and IL2-activated NK cells. Abundantly expressed on CD14+/CD16- monocytes and weakly on CD14+/CD16+ monocytes, type 2 dendritic cells (DCs) and plasmacytoid DCs (at protein level).

Its subcellular location is the cell membrane. Key functional receptor for CCL2 but can also bind CCL7, and CCL12. Also transduces signaling mediated by CCL13. Its binding with CCL2 on monocytes and macrophages mediates chemotaxis and migration induction through the activation of the PI3K cascade, the small G protein Rac and lamellipodium protrusion. Also acts as a receptor for the beta-defensin DEFB106A/DEFB106B. Regulates the expression of T-cell inflammatory cytokines and T-cell differentiation, promoting the differentiation of T-cells into T-helper 17 cells (Th17) during inflammation. Facilitates the export of mature thymocytes by enhancing directional movement of thymocytes to sphingosine-1-phosphate stimulation and up-regulation of S1P1R expression; signals through the JAK-STAT pathway to regulate FOXO1 activity leading to an increased expression of S1P1R. Plays an important role in mediating peripheral nerve injury-induced neuropathic pain. Increases NMDA-mediated synaptic transmission in both dopamine D1 and D2 receptor-containing neurons, which may be caused by MAPK/ERK-dependent phosphorylation of GRIN2B/NMDAR2B. Mediates the recruitment of macrophages and monocytes to the injury site following brain injury. In terms of biological role, (Microbial infection) Alternative coreceptor with CD4 for HIV-1 infection. This Homo sapiens (Human) protein is C-C chemokine receptor type 2 (CCR2).